Reading from the N-terminus, the 138-residue chain is Putative nickel-responsive regulator (138 aa).

Residues H78, H89, H91, and C97 each coordinate Ni(2+).

This sequence belongs to the transcriptional regulatory CopG/NikR family. The cofactor is Ni(2+).

Functionally, transcriptional regulator. This Pyrococcus furiosus (strain ATCC 43587 / DSM 3638 / JCM 8422 / Vc1) protein is Putative nickel-responsive regulator.